We begin with the raw amino-acid sequence, 248 residues long: DnaA regulatory inactivator Hda (248 aa).

The protein belongs to the DnaA family. HdA subfamily. The active form seems to be an ADP-bound monomer. Forms the RIDA complex (regulatory inactivation of DnaA) of ATP-DnaA, ADP-Hda and the DNA-loaded beta sliding clamp (dnaN).

Its function is as follows. Mediates the interaction of DNA replication initiator protein DnaA with DNA polymerase subunit beta sliding clamp (dnaN). Stimulates hydrolysis of ATP-DnaA to ADP-DnaA, rendering DnaA inactive for reinitiation, a process called regulatory inhibition of DnaA or RIDA. The sequence is that of DnaA regulatory inactivator Hda from Proteus mirabilis (strain HI4320).